The primary structure comprises 210 residues: FMN-dependent NADH:quinone oxidoreductase 9 (210 aa).

FMN-binding positions include serine 10 and 16-18; that span reads SAS.

The protein belongs to the azoreductase type 1 family. As to quaternary structure, homodimer. The cofactor is FMN.

The enzyme catalyses 2 a quinone + NADH + H(+) = 2 a 1,4-benzosemiquinone + NAD(+). It carries out the reaction N,N-dimethyl-1,4-phenylenediamine + anthranilate + 2 NAD(+) = 2-(4-dimethylaminophenyl)diazenylbenzoate + 2 NADH + 2 H(+). Its function is as follows. Quinone reductase that provides resistance to thiol-specific stress caused by electrophilic quinones. Also exhibits azoreductase activity. Catalyzes the reductive cleavage of the azo bond in aromatic azo compounds to the corresponding amines. This Burkholderia lata (strain ATCC 17760 / DSM 23089 / LMG 22485 / NCIMB 9086 / R18194 / 383) protein is FMN-dependent NADH:quinone oxidoreductase 9.